A 443-amino-acid polypeptide reads, in one-letter code: Tol-Pal system protein TolB (443 aa).

The first 33 residues, 1–33, serve as a signal peptide directing secretion; that stretch reads MKIGIINTKIRTVFSAFACMIAASLVCTMPARA.

Belongs to the TolB family. In terms of assembly, the Tol-Pal system is composed of five core proteins: the inner membrane proteins TolA, TolQ and TolR, the periplasmic protein TolB and the outer membrane protein Pal. They form a network linking the inner and outer membranes and the peptidoglycan layer.

The protein resides in the periplasm. In terms of biological role, part of the Tol-Pal system, which plays a role in outer membrane invagination during cell division and is important for maintaining outer membrane integrity. In Brucella suis biovar 1 (strain 1330), this protein is Tol-Pal system protein TolB.